We begin with the raw amino-acid sequence, 445 residues long: N-succinylarginine dihydrolase (445 aa).

Substrate-binding positions include 19-28 (AGLSFGNVAS), N110, and 137-138 (HR). E174 is a catalytic residue. R214 lines the substrate pocket. H250 is a catalytic residue. Substrate-binding residues include D252 and N363. Catalysis depends on C369, which acts as the Nucleophile.

The protein belongs to the succinylarginine dihydrolase family. In terms of assembly, homodimer.

It catalyses the reaction N(2)-succinyl-L-arginine + 2 H2O + 2 H(+) = N(2)-succinyl-L-ornithine + 2 NH4(+) + CO2. It functions in the pathway amino-acid degradation; L-arginine degradation via AST pathway; L-glutamate and succinate from L-arginine: step 2/5. Its function is as follows. Catalyzes the hydrolysis of N(2)-succinylarginine into N(2)-succinylornithine, ammonia and CO(2). This chain is N-succinylarginine dihydrolase, found in Shewanella sediminis (strain HAW-EB3).